The following is a 436-amino-acid chain: Gamma-glutamyl phosphate reductase (436 aa).

This sequence belongs to the gamma-glutamyl phosphate reductase family.

It is found in the cytoplasm. It catalyses the reaction L-glutamate 5-semialdehyde + phosphate + NADP(+) = L-glutamyl 5-phosphate + NADPH + H(+). It participates in amino-acid biosynthesis; L-proline biosynthesis; L-glutamate 5-semialdehyde from L-glutamate: step 2/2. Functionally, catalyzes the NADPH-dependent reduction of L-glutamate 5-phosphate into L-glutamate 5-semialdehyde and phosphate. The product spontaneously undergoes cyclization to form 1-pyrroline-5-carboxylate. This chain is Gamma-glutamyl phosphate reductase, found in Prochlorococcus marinus (strain SARG / CCMP1375 / SS120).